The chain runs to 311 residues: Malate dehydrogenase (311 aa).

NAD(+)-binding positions include 7–13 (GAAGGIG) and aspartate 34. Positions 81 and 87 each coordinate substrate. NAD(+) is bound by residues asparagine 94 and 117–119 (ITN). 2 residues coordinate substrate: asparagine 119 and arginine 153. Histidine 177 serves as the catalytic Proton acceptor. Methionine 227 contributes to the NAD(+) binding site.

Belongs to the LDH/MDH superfamily. MDH type 1 family. In terms of assembly, homodimer.

The enzyme catalyses (S)-malate + NAD(+) = oxaloacetate + NADH + H(+). Its function is as follows. Catalyzes the reversible oxidation of malate to oxaloacetate. This is Malate dehydrogenase from Histophilus somni (strain 129Pt) (Haemophilus somnus).